The following is an 816-amino-acid chain: H(+)/Cl(-) exchange transporter 5 (816 aa).

At 1–124 (MAMWQGAMDN…WALIHSVSDA (124 aa)) the chain is on the cytoplasmic side. Helical transmembrane passes span 125-162 (FSGW…ICTG) and 208-231 (VNYF…VKVF). Residues 237 to 241 (GSGIP) carry the Selectivity filter part_1 motif. A chloride-binding site is contributed by Ser-238. Residues 240–247 (IPEIKTIL) constitute an intramembrane region (helical). The next 2 helical transmembrane spans lie at 256 to 275 (LGKW…VSSG) and 281 to 300 (EGPL…HRFN). Positions 279 to 283 (GKEGP) match the Selectivity filter part_2 motif. Intramembrane regions (helical) lie at residues 312–324 (VLSA…VSVA) and 328–336 (PIGGVLFSL). Helical transmembrane passes span 348–366 (LWRS…RSIN), 389–414 (LVPF…IAWC), 422–442 (LGKY…ILAF), 498–518 (MWQL…TFGM), and 523–542 (GLFI…LGVG). Residues 523–527 (GLFIP) carry the Selectivity filter part_3 motif. Phe-525 provides a ligand contact to chloride. Positions 570–584 (GLYAMVGAAACLGGV) form an intramembrane region, helical. The segment at residues 585 to 587 (TRM) is an intramembrane region (note=Loop between two helices). An intramembrane region (helical) is located at residues 588 to 599 (TVSLVVIMFELT). Residues 600–604 (GGLEY) constitute an intramembrane region (note=Loop between two helices). A helical transmembrane segment spans residues 605-622 (IVPLMAAAMTSKWVADAL). The Cytoplasmic segment spans residues 623–816 (GREGIYDAHI…NQDPDSILFN (194 aa)). Tyr-628 is a chloride binding site. 2 CBS domains span residues 656 to 720 (MKPR…ARKK) and 752 to 812 (ILDL…DPDS). ATP-binding positions include Thr-666, 687 to 689 (YSG), and 794 to 797 (TKKD).

It belongs to the chloride channel (TC 2.A.49) family. ClC-5/CLCN5 subfamily. In terms of assembly, interacts with NEDD4 and NEDD4L. Ubiquitinated by NEDD4L in the presence of albumin; which promotes endocytosis and proteasomal degradation.

It localises to the golgi apparatus membrane. The protein localises to the endosome membrane. It is found in the cell membrane. It catalyses the reaction 2 chloride(in) + H(+)(out) = 2 chloride(out) + H(+)(in). In terms of biological role, proton-coupled chloride transporter. Functions as antiport system and exchanges chloride ions against protons. Important for normal acidification of the endosome lumen. May play an important role in renal tubular function. The CLC channel family contains both chloride channels and proton-coupled anion transporters that exchange chloride or another anion for protons. The absence of conserved gating glutamate residues is typical for family members that function as channels. The polypeptide is H(+)/Cl(-) exchange transporter 5 (CLCN5) (Oryctolagus cuniculus (Rabbit)).